Consider the following 441-residue polypeptide: Transcription factor bHLH90 (441 aa).

Residues 260–309 form the bHLH domain; it reads NFKSKNLHSERKRRERINQAMYGLRAVVPKITKLNKIGIFSDAVDYINEL.

Homodimer. In terms of tissue distribution, expressed constitutively in roots, leaves, stems, and flowers.

The protein resides in the nucleus. This chain is Transcription factor bHLH90 (BHLH90), found in Arabidopsis thaliana (Mouse-ear cress).